Reading from the N-terminus, the 98-residue chain is Large ribosomal subunit protein uL23 (98 aa).

Belongs to the universal ribosomal protein uL23 family. In terms of assembly, part of the 50S ribosomal subunit. Contacts protein L29, and trigger factor when it is bound to the ribosome.

One of the early assembly proteins it binds 23S rRNA. One of the proteins that surrounds the polypeptide exit tunnel on the outside of the ribosome. Forms the main docking site for trigger factor binding to the ribosome. The protein is Large ribosomal subunit protein uL23 of Methylorubrum extorquens (strain CM4 / NCIMB 13688) (Methylobacterium extorquens).